Reading from the N-terminus, the 272-residue chain is Alpha-tubulin N-acetyltransferase (272 aa).

The 186-residue stretch at 1–186 (MEFRFNCHPL…NNFVVYEGFF (186 aa)) folds into the N-acetyltransferase domain. Residues 120–133 (FYVH…GLGR) and 156–165 (SEKLLGFLQK) contribute to the acetyl-CoA site. Positions 216-244 (TTVGEQRRSSSQTRQQVVSPPVVQQPPVG) are disordered. Positions 224 to 244 (SSSQTRQQVVSPPVVQQPPVG) are enriched in low complexity.

The protein belongs to the acetyltransferase ATAT1 family.

The catalysed reaction is L-lysyl-[alpha-tubulin] + acetyl-CoA = N(6)-acetyl-L-lysyl-[alpha-tubulin] + CoA + H(+). Its function is as follows. Specifically acetylates 'Lys-40' in alpha-tubulin on the lumenal side of microtubules. Promotes microtubule destabilization and accelerates microtubule dynamics; this activity may be independent of acetylation activity. Acetylates alpha-tubulin with a slow enzymatic rate, due to a catalytic site that is not optimized for acetyl transfer. Enters the microtubule through each end and diffuses quickly throughout the lumen of microtubules. Acetylates only long/old microtubules because of its slow acetylation rate since it does not have time to act on dynamically unstable microtubules before the enzyme is released. This Aedes aegypti (Yellowfever mosquito) protein is Alpha-tubulin N-acetyltransferase.